Consider the following 438-residue polypeptide: Na(+)/H(+) antiporter NhaA (438 aa).

The next 11 helical transmembrane spans lie at 23 to 43 (FGGI…NSFL), 62 to 82 (FFIG…LFFL), 104 to 124 (SFPV…YFFL), 133 to 153 (GFGI…MLLG), 162 to 182 (VFLI…IALF), 185 to 205 (TNLK…LALL), 221 to 241 (VLLW…AVVL), 302 to 322 (FLAP…NAGV), 337 to 357 (FGVI…ITFI), 372 to 392 (WWHI…SMFI), and 410 to 430 (IAIL…LFAL).

It belongs to the NhaA Na(+)/H(+) (TC 2.A.33) antiporter family.

The protein resides in the cell inner membrane. The enzyme catalyses Na(+)(in) + 2 H(+)(out) = Na(+)(out) + 2 H(+)(in). Functionally, na(+)/H(+) antiporter that extrudes sodium in exchange for external protons. The chain is Na(+)/H(+) antiporter NhaA from Helicobacter pylori (strain P12).